Reading from the N-terminus, the 534-residue chain is MGSLLFDSPVGRFVASFPALSAAAGLIVAISFIYIRFIKTPKLDLPVVGNPGDKWDAQKHIVAGARKYPDTPYILPMDPPIVVLPIKIQDEVRNLPENVVSFTKEHQRNFFAQYTGIGDHRPEMITAIRQDLTRHIVSTIPGLQEEVRYGFDKEFGDCKDWTPFPLYMKVLRIVALTSGRVFVGRPLSREEEWLQRTISYTMDCVKARNAIREYPWWKRRWVTSSLPEIAKLTEHRTRGGVLLKPIMDAQLAKDSKREKIINEETGDEEGNFIEWLLKHTPGDLKMDPENLALNQMVLAFASVHTSSMSVTHAILELVTRPEYFAPLREELEEVRRADGHTVDDDGYIRLKKESINKLRKLDSFMKESQRFNPPISTSGTRICTADLKLSTGHTLPKGTRICFPSYDVHHNPKTTTYSPEYNPPGYTPPDQFDGLRFFKLREMPGKESRHQFATANHESLVFGFGNHTCPGRFFAANQIKIILAELLMNWDVRLKGDVEQKGGPEKRPQNMVVDLVITPNPMAMVEMKRRSRAV.

Residues 13-33 (FVASFPALSAAAGLIVAISFI) traverse the membrane as a helical segment. N466 carries an N-linked (GlcNAc...) asparagine glycan. Residue C469 coordinates heme.

This sequence belongs to the cytochrome P450 family. Heme is required as a cofactor.

The protein resides in the membrane. The enzyme catalyses ilicicolin C + NADPH + O2 + H(+) = ascochlorin + NADP(+) + 2 H2O. Its pathway is secondary metabolite biosynthesis; terpenoid biosynthesis. Cytochrome P450 monooxygenase; part of the asc-1 gene cluster that mediates the biosynthesis of both ascochlorin and ascofuranone, a strong inhibitor of cyanide-insensitive alternative oxidases and a promising drug candidate against African trypanosomiasis. The first step in the pathway is performed by the non-reducing polyketide synthase ascC that produces orsellinic acid by condensing acetyl-CoA with 3 malonyl-CoA units. Orsellinic acid is then prenylated by the prenyltransferase ascA to yield ilicicolinic acid B. Ilicicolinic acid B is further reduced to ilicicolin B by the reductase ascB. The halogenase ascD then chlorinates ilicicolin B to produce ilicicolin A which is converted to ilicicolin A epoxide by the cytochrome P450 monooxygenase ascE that catalyzes stereoselective epoxidation of the terminal double bond of the prenyl group. Ilicicolin A epoxide is the last common precursor for the biosynthesis of ascofuranone and ascochlorin. The terpene cyclase ascF produces a monocyclic terpene, and the cyclization reaction is proposed to be initiated by protonation of the terminal epoxide of ilicicolin A epoxide to generate a monocyclic tertiarycation, which is followed by a series of hydride and methyl shifts with abstraction of proton, leading to the formation of the (14S,15R,19R)-trimethylcyclohexanone ring structure of ilicicolin C, which is finally reduced to ascochlorin by the dehydrogenase ascG. On the other hand, ilicicolin A epoxide is hydroxylated by the cytochrome P450 monooxygenase ascH, and the resultant product is cyclized by the terpene cyclase ascI to ascofuranol via protonation-initiated epoxide ring opening, which facilitates the 6-endo-tet cyclization to form the tetrahy-drofuran ring. Finally, ascofuranol is oxidized into ascofuranone by ascJ. This Acremonium egyptiacum (Oospora egyptiaca) protein is Cytochrome P450 monooxygenase ascG.